A 386-amino-acid polypeptide reads, in one-letter code: Probable mannan endo-1,4-beta-mannosidase A (386 aa).

The signal sequence occupies residues 1–21; the sequence is MKLNPSLLTAAGLVSAQLASA. 2 residues coordinate substrate: W95 and N207. The active-site Proton donor is the E208. Y283 serves as a coordination point for substrate. Residue E316 is the Nucleophile of the active site. N336 is a glycosylation site (N-linked (GlcNAc...) asparagine). W346 serves as a coordination point for substrate.

It belongs to the glycosyl hydrolase 5 (cellulase A) family.

It is found in the secreted. The enzyme catalyses Random hydrolysis of (1-&gt;4)-beta-D-mannosidic linkages in mannans, galactomannans and glucomannans.. In terms of biological role, endo-1,4-mannanase, a crucial enzyme for depolymerization of seed galactomannans and wood galactoglucomannans. The chain is Probable mannan endo-1,4-beta-mannosidase A (manA) from Aspergillus flavus (strain ATCC 200026 / FGSC A1120 / IAM 13836 / NRRL 3357 / JCM 12722 / SRRC 167).